The sequence spans 160 residues: Transcription antitermination protein NusB (160 aa).

The protein belongs to the NusB family.

Involved in transcription antitermination. Required for transcription of ribosomal RNA (rRNA) genes. Binds specifically to the boxA antiterminator sequence of the ribosomal RNA (rrn) operons. This Salinibacter ruber (strain DSM 13855 / M31) protein is Transcription antitermination protein NusB.